The primary structure comprises 736 residues: Prolyl oligopeptidase dbiP (736 aa).

Catalysis depends on charge relay system residues Ser-572, Asp-656, and His-692.

This sequence belongs to the peptidase S9A family. As to quaternary structure, monomer.

The catalysed reaction is Hydrolysis of Pro-|-Xaa &gt;&gt; Ala-|-Xaa in oligopeptides.. Its pathway is mycotoxin biosynthesis. Its function is as follows. Prolyl oligopeptidase; part of the gene cluster that mediates the biosynthesis of dendrothelin A, a highly methylated cyclic dodecapeptide showing slight nematodicidal activity. Excises and catalyzes the macrocyclization of the methylated core peptide of dbiMA to yield dendrothelin A. DbiP works in a two-step fashion with an initial cleavage at the N-terminus, followed by a second cleavage at the C-terminus of the core peptide. According to this mechanism, the free N-terminus of the core peptide, generated by the first cleavage, attacks the covalent intermediate of the second cleavage, which results in macrocyclization of the core peptide. The polypeptide is Prolyl oligopeptidase dbiP (Dendrothele bispora (strain CBS 962.96)).